Here is a 257-residue protein sequence, read N- to C-terminus: Methylthioribulose-1-phosphate dehydratase (257 aa).

The segment at 1–33 (MVSSQEKMASISDIIQKDEDSGSEKTESQDKEH) is disordered. The segment covering 15 to 33 (IQKDEDSGSEKTESQDKEH) has biased composition (basic and acidic residues). Substrate is bound at residue Cys107. Zn(2+) contacts are provided by His125 and His127. Glu149 functions as the Proton donor/acceptor in the catalytic mechanism. His205 contacts Zn(2+).

This sequence belongs to the aldolase class II family. MtnB subfamily. Requires Zn(2+) as cofactor.

The protein resides in the cytoplasm. The enzyme catalyses 5-(methylsulfanyl)-D-ribulose 1-phosphate = 5-methylsulfanyl-2,3-dioxopentyl phosphate + H2O. Its pathway is amino-acid biosynthesis; L-methionine biosynthesis via salvage pathway; L-methionine from S-methyl-5-thio-alpha-D-ribose 1-phosphate: step 2/6. In terms of biological role, catalyzes the dehydration of methylthioribulose-1-phosphate (MTRu-1-P) into 2,3-diketo-5-methylthiopentyl-1-phosphate (DK-MTP-1-P). Functions in the methionine salvage pathway. May play a role in apoptosis. The polypeptide is Methylthioribulose-1-phosphate dehydratase (Esox lucius (Northern pike)).